A 707-amino-acid polypeptide reads, in one-letter code: Protein O-mannosyl-transferase TMEM260 (707 aa).

The next 8 membrane-spanning stretches (helical) occupy residues 28 to 48 (GGVA…PPSV), 71 to 91 (YPLF…GSIA), 94 to 114 (VNLL…FTVF), 141 to 161 (IAAE…ALTV), 189 to 209 (NQHT…FQLL), 222 to 242 (LSLY…SSYL), 318 to 338 (NPSL…FFAW), and 356 to 376 (FWMQ…AAVV). The Lumenal segment spans residues 377–707 (SETNRVLNSN…LQSLRNRKNV (331 aa)). Asparagine 407, asparagine 535, and asparagine 568 each carry an N-linked (GlcNAc...) asparagine glycan.

This sequence belongs to the glycosyltransferase 117 (GT117) family. Expressed in brain, heart, kidney, liver, lung, pancreas and placenta but are not detected in skeletal muscle.

The protein resides in the endoplasmic reticulum membrane. It is found in the membrane. The catalysed reaction is a di-trans,poly-cis-dolichyl beta-D-mannosyl phosphate + L-seryl-[protein] = 3-O-(alpha-D-mannosyl)-L-seryl-[protein] + a di-trans,poly-cis-dolichyl phosphate + H(+). It catalyses the reaction a di-trans,poly-cis-dolichyl beta-D-mannosyl phosphate + L-threonyl-[protein] = 3-O-(alpha-D-mannosyl)-L-threonyl-[protein] + a di-trans,poly-cis-dolichyl phosphate + H(+). In terms of biological role, O-mannosyl-transferase that transfers mannosyl residues to the hydroxyl group of serine or threonine residues of proteins. Specifically glycosylates the IPT/TIG domain of target proteins, such as MET and MST1R/RON. TMEM260-mediated O-mannosylated residues are composed of single mannose glycans that are not elongated or modified. The protein is Protein O-mannosyl-transferase TMEM260 of Homo sapiens (Human).